The chain runs to 363 residues: Carbamoyl phosphate synthase small chain (363 aa).

A CPSase region spans residues 1–173; the sequence is MMKAFLVLDN…SKYIFGTHTG (173 aa). L-glutamine is bound by residues Ser46, Gly225, and Gly227. A Glutamine amidotransferase type-1 domain is found at 177–363; that stretch reads KLAVYDYGVK…YDLVEKTKKG (187 aa). Catalysis depends on Cys253, which acts as the Nucleophile. The L-glutamine site is built by Leu254, Gln257, Asn295, Gly297, and Phe298. Catalysis depends on residues His336 and Glu338.

It belongs to the CarA family. Composed of two chains; the small (or glutamine) chain promotes the hydrolysis of glutamine to ammonia, which is used by the large (or ammonia) chain to synthesize carbamoyl phosphate. Tetramer of heterodimers (alpha,beta)4.

It carries out the reaction hydrogencarbonate + L-glutamine + 2 ATP + H2O = carbamoyl phosphate + L-glutamate + 2 ADP + phosphate + 2 H(+). The catalysed reaction is L-glutamine + H2O = L-glutamate + NH4(+). It participates in amino-acid biosynthesis; L-arginine biosynthesis; carbamoyl phosphate from bicarbonate: step 1/1. The protein operates within pyrimidine metabolism; UMP biosynthesis via de novo pathway; (S)-dihydroorotate from bicarbonate: step 1/3. Functionally, small subunit of the glutamine-dependent carbamoyl phosphate synthetase (CPSase). CPSase catalyzes the formation of carbamoyl phosphate from the ammonia moiety of glutamine, carbonate, and phosphate donated by ATP, constituting the first step of 2 biosynthetic pathways, one leading to arginine and/or urea and the other to pyrimidine nucleotides. The small subunit (glutamine amidotransferase) binds and cleaves glutamine to supply the large subunit with the substrate ammonia. The chain is Carbamoyl phosphate synthase small chain from Leptospira interrogans serogroup Icterohaemorrhagiae serovar copenhageni (strain Fiocruz L1-130).